The chain runs to 345 residues: Uroporphyrinogen decarboxylase (345 aa).

Substrate contacts are provided by residues 27 to 31 (RQAGR), phenylalanine 46, aspartate 76, tyrosine 152, serine 207, and histidine 320.

This sequence belongs to the uroporphyrinogen decarboxylase family. Homodimer.

It is found in the cytoplasm. It carries out the reaction uroporphyrinogen III + 4 H(+) = coproporphyrinogen III + 4 CO2. It functions in the pathway porphyrin-containing compound metabolism; protoporphyrin-IX biosynthesis; coproporphyrinogen-III from 5-aminolevulinate: step 4/4. Functionally, catalyzes the decarboxylation of four acetate groups of uroporphyrinogen-III to yield coproporphyrinogen-III. The polypeptide is Uroporphyrinogen decarboxylase (Geobacillus kaustophilus (strain HTA426)).